A 322-amino-acid chain; its full sequence is 4-hydroxythreonine-4-phosphate dehydrogenase (322 aa).

Position 132 (threonine 132) interacts with substrate. Residues histidine 160, histidine 205, and histidine 260 each contribute to the a divalent metal cation site. 3 residues coordinate substrate: lysine 268, asparagine 277, and arginine 286.

Belongs to the PdxA family. As to quaternary structure, homodimer. It depends on Zn(2+) as a cofactor. Mg(2+) serves as cofactor. Requires Co(2+) as cofactor.

The protein localises to the cytoplasm. It catalyses the reaction 4-(phosphooxy)-L-threonine + NAD(+) = 3-amino-2-oxopropyl phosphate + CO2 + NADH. Its pathway is cofactor biosynthesis; pyridoxine 5'-phosphate biosynthesis; pyridoxine 5'-phosphate from D-erythrose 4-phosphate: step 4/5. Its function is as follows. Catalyzes the NAD(P)-dependent oxidation of 4-(phosphooxy)-L-threonine (HTP) into 2-amino-3-oxo-4-(phosphooxy)butyric acid which spontaneously decarboxylates to form 3-amino-2-oxopropyl phosphate (AHAP). The chain is 4-hydroxythreonine-4-phosphate dehydrogenase from Xanthomonas oryzae pv. oryzae (strain PXO99A).